Consider the following 699-residue polypeptide: Polyribonucleotide nucleotidyltransferase (699 aa).

Residues Asp485 and Asp491 each coordinate Mg(2+). One can recognise a KH domain in the interval 552 to 611; that stretch reads PRITTIKINPEKIRDVIGKGGAVIRALTEETGTTIELEDDGTVRIASSNGEATKEAIRRI. Positions 621 to 689 constitute an S1 motif domain; the sequence is GRIYNGKVIR…RQGRVRLSIK (69 aa).

This sequence belongs to the polyribonucleotide nucleotidyltransferase family. Component of the RNA degradosome, which is a multiprotein complex involved in RNA processing and mRNA degradation. Requires Mg(2+) as cofactor.

It localises to the cytoplasm. It catalyses the reaction RNA(n+1) + phosphate = RNA(n) + a ribonucleoside 5'-diphosphate. Its function is as follows. Involved in mRNA degradation. Catalyzes the phosphorolysis of single-stranded polyribonucleotides processively in the 3'- to 5'-direction. The polypeptide is Polyribonucleotide nucleotidyltransferase (Shewanella sp. (strain W3-18-1)).